The chain runs to 612 residues: uncharacterized protein (612 aa).

Positions 8-75 constitute a J domain; the sequence is ELYLALGLPK…SKKEIYDNFG (68 aa). A helical membrane pass occupies residues 445–465; sequence AVFWGLVFPITSILGVEQFFL.

The protein belongs to the DnaJ family.

It localises to the membrane. This is an uncharacterized protein from Schizosaccharomyces pombe (strain 972 / ATCC 24843) (Fission yeast).